The chain runs to 144 residues: ATP synthase subunit 9, mitochondrial (144 aa).

The N-terminal 63 residues, 1–63, are a transit peptide targeting the mitochondrion; it reads MASTRVLASR…ATRQITQKRA (63 aa). A run of 2 helical transmembrane segments spans residues 83-103 and 120-140; these read TAAI…AALL and AILG…VALM.

Belongs to the ATPase C chain family. As to quaternary structure, F-type ATPases have 2 components, CF(1) - the catalytic core - and CF(0) - the membrane proton channel. CF(1) has five subunits: alpha(3), beta(3), gamma(1), delta(1), epsilon(1). CF(0) has three main subunits: a, b and c.

It is found in the mitochondrion membrane. In terms of biological role, mitochondrial membrane ATP synthase (F(1)F(0) ATP synthase or Complex V) produces ATP from ADP in the presence of a proton gradient across the membrane which is generated by electron transport complexes of the respiratory chain. F-type ATPases consist of two structural domains, F(1) - containing the extramembraneous catalytic core and F(0) - containing the membrane proton channel, linked together by a central stalk and a peripheral stalk. During catalysis, ATP synthesis in the catalytic domain of F(1) is coupled via a rotary mechanism of the central stalk subunits to proton translocation. Part of the complex F(0) domain. A homomeric c-ring of probably 10 subunits is part of the complex rotary element. The sequence is that of ATP synthase subunit 9, mitochondrial (ATP9) from Podospora anserina (Pleurage anserina).